The chain runs to 757 residues: MDYLESLDFPKVVEIVKKYALSDLGRKHLDTLKPTVNPWDELELVEELLNYFNRWGEPPIKGLNDISQEVEKVKSGSPLEPWELLRVSVFLEGCDILKKEFEKREYSRLKETFSRLSSFREFVEEVNRCIEQDGEISDRASPRLREIRTEKKRLSSEIKRKADDFVRTHSQILQEQMYVYRDGRYLFPVKASMKNAVRGIVHHLSSSGATVFLEPDEFVELNNRVRLLEEEERLEISRILRQLTNILLSRLNDLERNVELIARFDSLYARVKFAREFNGTVVKPSSRIRLVNARHPLIPKERVVPINLELPPNKRGFIITGPNMGGKTVTVKTVGLFTALMMSGFPLPCDEGTELKVFPKIMADIGEEQSIEQSLSTFSSHMKKIVEIVKNADSDSLVILDELGSGTDPVEGAALAIAIIEDLLEKGATIFVTTHLTPVKVFAMNHPLLLNASMEFDPETLSPTYRVLVGVPGGSHAFQIAEKLGLDKRIIENARSRLSREEMELEGLIRSLHEKISLLEEEKRKLQKEREEYMKLREKYEEDYKKLRRMKIEEFDKELRELNDYIRKVKKELDQAIHVAKTGSVDEMREAVKTIEKEKKDLEQKRIEEATEEEIKPGDHVKMEGGTSVGKVVEVKSGTALVDFGFLRLKVPVSKLRKTKKEEKKETSTFSYKPSSFRTEIDIRGMTVEEAEPVVKKFIDDLMMNGISKGYIIHGKGTGKLASGVWEILRKDKRVVSFRFGTPSEGGTGVTVVEVKV.

An ATP-binding site is contributed by 321-328 (GPNMGGKT). A Smr domain is found at 681–756 (IDIRGMTVEE…GTGVTVVEVK (76 aa)).

This sequence belongs to the DNA mismatch repair MutS family. MutS2 subfamily. As to quaternary structure, homodimer. Binds to stalled ribosomes, contacting rRNA. Interacts with MutL.

Its activity is regulated as follows. Nuclease activity is stimulated by interaction with MutL and inhibited in the presence of non-hydrolytic ATP (ADPnP). ATPase activity is stimulated by DNA. Endonuclease that is involved in the suppression of homologous recombination and thus may have a key role in the control of bacterial genetic diversity. Has ATPase activity. Binds to DNA. Functionally, acts as a ribosome collision sensor, splitting the ribosome into its 2 subunits. Detects stalled/collided 70S ribosomes which it binds and splits by an ATP-hydrolysis driven conformational change. Acts upstream of the ribosome quality control system (RQC), a ribosome-associated complex that mediates the extraction of incompletely synthesized nascent chains from stalled ribosomes and their subsequent degradation. Probably generates substrates for RQC. The protein is Endonuclease MutS2 of Thermotoga maritima (strain ATCC 43589 / DSM 3109 / JCM 10099 / NBRC 100826 / MSB8).